The sequence spans 168 residues: 6,7-dimethyl-8-ribityllumazine synthase (168 aa).

5-amino-6-(D-ribitylamino)uracil-binding positions include Trp-31, 65–67 (SFE), and 90–92 (NVI). 95–96 (ET) is a binding site for (2S)-2-hydroxy-3-oxobutyl phosphate. Catalysis depends on His-98, which acts as the Proton donor. Phe-123 serves as a coordination point for 5-amino-6-(D-ribitylamino)uracil. Residue Arg-137 participates in (2S)-2-hydroxy-3-oxobutyl phosphate binding.

The protein belongs to the DMRL synthase family.

The catalysed reaction is (2S)-2-hydroxy-3-oxobutyl phosphate + 5-amino-6-(D-ribitylamino)uracil = 6,7-dimethyl-8-(1-D-ribityl)lumazine + phosphate + 2 H2O + H(+). The protein operates within cofactor biosynthesis; riboflavin biosynthesis; riboflavin from 2-hydroxy-3-oxobutyl phosphate and 5-amino-6-(D-ribitylamino)uracil: step 1/2. Functionally, catalyzes the formation of 6,7-dimethyl-8-ribityllumazine by condensation of 5-amino-6-(D-ribitylamino)uracil with 3,4-dihydroxy-2-butanone 4-phosphate. This is the penultimate step in the biosynthesis of riboflavin. In Christiangramia forsetii (strain DSM 17595 / CGMCC 1.15422 / KT0803) (Gramella forsetii), this protein is 6,7-dimethyl-8-ribityllumazine synthase.